We begin with the raw amino-acid sequence, 129 residues long: MAKAPTRARKRVRKQVSDGIAHVHASFNNTIVTITDRQGNALSWATAGGSGFRGSRKSTPFAAQVAAERAGEIAKEYGVKNLEVMVKGPGPGRESSIRALNAAGFRITNITDVTPIPHNGCRPPKKRRV.

Belongs to the universal ribosomal protein uS11 family. Part of the 30S ribosomal subunit. Interacts with proteins S7 and S18. Binds to IF-3.

Located on the platform of the 30S subunit, it bridges several disparate RNA helices of the 16S rRNA. Forms part of the Shine-Dalgarno cleft in the 70S ribosome. The protein is Small ribosomal subunit protein uS11 of Tolumonas auensis (strain DSM 9187 / NBRC 110442 / TA 4).